Here is a 329-residue protein sequence, read N- to C-terminus: UDP-N-acetylenolpyruvoylglucosamine reductase (329 aa).

An FAD-binding PCMH-type domain is found at 28 to 192; it reads RVGGPADLLC…ARVEVRLHPG (165 aa). Arginine 172 is a catalytic residue. The active-site Proton donor is serine 221. Residue glutamate 291 is part of the active site. A disordered region spans residues 307–329; the sequence is DGHAAAGGGPGAASGGVRPPEAT. Residues 311–320 show a composition bias toward gly residues; sequence AAGGGPGAAS.

Belongs to the MurB family. It depends on FAD as a cofactor.

Its subcellular location is the cytoplasm. It catalyses the reaction UDP-N-acetyl-alpha-D-muramate + NADP(+) = UDP-N-acetyl-3-O-(1-carboxyvinyl)-alpha-D-glucosamine + NADPH + H(+). It participates in cell wall biogenesis; peptidoglycan biosynthesis. Functionally, cell wall formation. The polypeptide is UDP-N-acetylenolpyruvoylglucosamine reductase (Anaeromyxobacter dehalogenans (strain 2CP-1 / ATCC BAA-258)).